A 233-amino-acid polypeptide reads, in one-letter code: Phosphoribosylaminoimidazole-succinocarboxamide synthase (233 aa).

The protein belongs to the SAICAR synthetase family.

It carries out the reaction 5-amino-1-(5-phospho-D-ribosyl)imidazole-4-carboxylate + L-aspartate + ATP = (2S)-2-[5-amino-1-(5-phospho-beta-D-ribosyl)imidazole-4-carboxamido]succinate + ADP + phosphate + 2 H(+). Its pathway is purine metabolism; IMP biosynthesis via de novo pathway; 5-amino-1-(5-phospho-D-ribosyl)imidazole-4-carboxamide from 5-amino-1-(5-phospho-D-ribosyl)imidazole-4-carboxylate: step 1/2. This Staphylococcus saprophyticus subsp. saprophyticus (strain ATCC 15305 / DSM 20229 / NCIMB 8711 / NCTC 7292 / S-41) protein is Phosphoribosylaminoimidazole-succinocarboxamide synthase.